Here is a 499-residue protein sequence, read N- to C-terminus: Proline dehydrogenase 1, mitochondrial (499 aa).

A mitochondrion-targeting transit peptide spans methionine 1–phenylalanine 72.

It belongs to the proline oxidase family. Requires FAD as cofactor. In terms of tissue distribution, ubiquitous. Highest expression in pollen grains, in the stigma and in developing embryos.

The protein localises to the mitochondrion. The catalysed reaction is L-proline + a quinone = (S)-1-pyrroline-5-carboxylate + a quinol + H(+). It participates in amino-acid degradation; L-proline degradation into L-glutamate; L-glutamate from L-proline: step 1/2. Its function is as follows. Converts proline to delta-1-pyrroline-5-carboxylate. This chain is Proline dehydrogenase 1, mitochondrial (POX1), found in Arabidopsis thaliana (Mouse-ear cress).